The sequence spans 294 residues: Basic endochitinase (294 aa).

Positions 1–24 (MNIKVSLLFILPIFLLLLTSKVKA) are cleaved as a signal peptide. The 270-residue stretch at 25–294 (GDIVVYWGQD…GYSSAIRGAV (270 aa)) folds into the GH18 domain. 2 cysteine pairs are disulfide-bonded: C44–C91 and C74–C81. Residue E151 is the Proton donor of the active site. An intrachain disulfide couples C182 to C211.

Belongs to the glycosyl hydrolase 18 family. Chitinase class II subfamily.

The catalysed reaction is Random endo-hydrolysis of N-acetyl-beta-D-glucosaminide (1-&gt;4)-beta-linkages in chitin and chitodextrins.. Its function is as follows. This protein functions as a defense against chitin containing fungal pathogens. This Nicotiana tabacum (Common tobacco) protein is Basic endochitinase.